A 484-amino-acid chain; its full sequence is Siroheme synthase 1 (484 aa).

The tract at residues 1-205 is precorrin-2 dehydrogenase /sirohydrochlorin ferrochelatase; that stretch reads MHHYPIFLKL…GREAEGEAEL (205 aa). NAD(+) contacts are provided by residues 22-23 and 43-44; these read EA and PV. Position 130 is a phosphoserine (Ser130). Positions 220–484 are uroporphyrinogen-III C-methyltransferase; it reads GEVFLVGAGP…DPCWTGGMRD (265 aa). Pro229 contacts S-adenosyl-L-methionine. Asp252 serves as the catalytic Proton acceptor. Lys274 acts as the Proton donor in catalysis. S-adenosyl-L-methionine is bound by residues 305 to 307, Leu310, 335 to 336, Met387, and Ala416; these read GGD and SA.

The protein in the N-terminal section; belongs to the precorrin-2 dehydrogenase / sirohydrochlorin ferrochelatase family. It in the C-terminal section; belongs to the precorrin methyltransferase family.

The catalysed reaction is uroporphyrinogen III + 2 S-adenosyl-L-methionine = precorrin-2 + 2 S-adenosyl-L-homocysteine + H(+). The enzyme catalyses precorrin-2 + NAD(+) = sirohydrochlorin + NADH + 2 H(+). It carries out the reaction siroheme + 2 H(+) = sirohydrochlorin + Fe(2+). Its pathway is cofactor biosynthesis; adenosylcobalamin biosynthesis; precorrin-2 from uroporphyrinogen III: step 1/1. The protein operates within cofactor biosynthesis; adenosylcobalamin biosynthesis; sirohydrochlorin from precorrin-2: step 1/1. It participates in porphyrin-containing compound metabolism; siroheme biosynthesis; precorrin-2 from uroporphyrinogen III: step 1/1. It functions in the pathway porphyrin-containing compound metabolism; siroheme biosynthesis; siroheme from sirohydrochlorin: step 1/1. Its pathway is porphyrin-containing compound metabolism; siroheme biosynthesis; sirohydrochlorin from precorrin-2: step 1/1. Functionally, multifunctional enzyme that catalyzes the SAM-dependent methylations of uroporphyrinogen III at position C-2 and C-7 to form precorrin-2 via precorrin-1. Then it catalyzes the NAD-dependent ring dehydrogenation of precorrin-2 to yield sirohydrochlorin. Finally, it catalyzes the ferrochelation of sirohydrochlorin to yield siroheme. In Halorhodospira halophila (strain DSM 244 / SL1) (Ectothiorhodospira halophila (strain DSM 244 / SL1)), this protein is Siroheme synthase 1.